Here is a 436-residue protein sequence, read N- to C-terminus: UPF0597 protein YhaM (436 aa).

This sequence belongs to the UPF0597 family.

This is UPF0597 protein YhaM from Shigella boydii serotype 18 (strain CDC 3083-94 / BS512).